A 103-amino-acid polypeptide reads, in one-letter code: NADH-quinone oxidoreductase subunit K (103 aa).

The next 3 helical transmembrane spans lie at V5–V25, I32–F52, and F66–I86.

Belongs to the complex I subunit 4L family. As to quaternary structure, NDH-1 is composed of 15 different subunits. Subunits NuoA, H, J, K, L, M, N constitute the membrane sector of the complex.

It localises to the cell membrane. It carries out the reaction a quinone + NADH + 5 H(+)(in) = a quinol + NAD(+) + 4 H(+)(out). Its function is as follows. NDH-1 shuttles electrons from NADH, via FMN and iron-sulfur (Fe-S) centers, to quinones in the respiratory chain. The immediate electron acceptor for the enzyme in this species is believed to be a menaquinone. Couples the redox reaction to proton translocation (for every two electrons transferred, four hydrogen ions are translocated across the cytoplasmic membrane), and thus conserves the redox energy in a proton gradient. The polypeptide is NADH-quinone oxidoreductase subunit K (Deinococcus radiodurans (strain ATCC 13939 / DSM 20539 / JCM 16871 / CCUG 27074 / LMG 4051 / NBRC 15346 / NCIMB 9279 / VKM B-1422 / R1)).